We begin with the raw amino-acid sequence, 389 residues long: MGQNLSVSNPLGFFPEHQLDPLFKANSNNPDWDFNPNKDNWPEATKVGVGAFGPGFTPPHGGLLGWSSQAQGAITTLPALPPPAATNRQSGRQPTPISPPLRDTHPQAMKWNSTVFHQTLQDPRVRGLYFPVGGSSSGTVNPVPTTASHISSIFSRTGDPAPNMENITSGFLGPLLVLQAGFFLLTKILTIPQSLDSWWTSLNFLGGAPVCPGQNSQSPTSNHSPTSCPPICPGYRWMCLRRFIIFLFILLLCLIFLLVLLDYQGMLPVCPLLPGSSTTSTGPCRTCTITAQGTSLYPSCCCTKPSDGNCTCIPIPSSWAFAKFLWEWASVRFSWLSLLAPFVQWFAGLSPTAWLLVIWMIWYWGPNLYNILNPFIPLLPIFFCLWVYI.

Residue Met-1 is modified to N-acetylmethionine. Gly-2 is lipidated: N-myristoyl glycine; by host. Residues 2–108 (GQNLSVSNPL…PPLRDTHPQA (107 aa)) are pre-S1. The pre-S stretch occupies residues 2–163 (GQNLSVSNPL…FSRTGDPAPN (162 aa)). Residues 2–170 (GQNLSVSNPL…APNMENITSG (169 aa)) are Virion surface; in external conformation-facing. At 2 to 242 (GQNLSVSNPL…PGYRWMCLRR (241 aa)) the chain is on the intravirion; in internal conformation side. The segment at 79-99 (ALPPPAATNRQSGRQPTPISP) is disordered. The tract at residues 109-163 (MKWNSTVFHQTLQDPRVRGLYFPVGGSSSGTVNPVPTTASHISSIFSRTGDPAPN) is pre-S2. A helical transmembrane segment spans residues 171–191 (FLGPLLVLQAGFFLLTKILTI). Topologically, residues 192 to 242 (PQSLDSWWTSLNFLGGAPVCPGQNSQSPTSNHSPTSCPPICPGYRWMCLRR) are intravirion; in external conformation. Residues 243–263 (FIIFLFILLLCLIFLLVLLDY) form a helical membrane-spanning segment. The Virion surface portion of the chain corresponds to 264 to 337 (QGMLPVCPLL…WASVRFSWLS (74 aa)). N-linked (GlcNAc...) asparagine; by host glycosylation occurs at Asn-309. Residues 338 to 358 (LLAPFVQWFAGLSPTAWLLVI) traverse the membrane as a helical segment. The Intravirion segment spans residues 359-364 (WMIWYW). Residues 365–387 (GPNLYNILNPFIPLLPIFFCLWV) traverse the membrane as a helical segment. The Virion surface portion of the chain corresponds to 388–389 (YI).

The protein belongs to the orthohepadnavirus major surface antigen family. In its internal form (Li-HBsAg), interacts with the capsid protein and with the isoform S. Interacts with host chaperone CANX. As to quaternary structure, associates with host chaperone CANX through its pre-S2 N glycan; this association may be essential for isoform M proper secretion. In terms of assembly, interacts with isoform L. Interacts with the antigens of satellite virus HDV (HDVAgs); this interaction is required for encapsidation of HDV genomic RNA. Isoform M is N-terminally acetylated by host at a ratio of 90%, and N-glycosylated by host at the pre-S2 region. In terms of processing, myristoylated.

Its subcellular location is the virion membrane. Its function is as follows. The large envelope protein exists in two topological conformations, one which is termed 'external' or Le-HBsAg and the other 'internal' or Li-HBsAg. In its external conformation the protein attaches the virus to cell receptors and thereby initiating infection. This interaction determines the species specificity and liver tropism. This attachment induces virion internalization predominantly through caveolin-mediated endocytosis. The large envelope protein also assures fusion between virion membrane and endosomal membrane. In its internal conformation the protein plays a role in virion morphogenesis and mediates the contact with the nucleocapsid like a matrix protein. Functionally, the middle envelope protein plays an important role in the budding of the virion. It is involved in the induction of budding in a nucleocapsid independent way. In this process the majority of envelope proteins bud to form subviral lipoprotein particles of 22 nm of diameter that do not contain a nucleocapsid. This is Large envelope protein from Hylobatidae (gibbons).